The sequence spans 303 residues: Protease HtpX homolog (303 aa).

2 helical membrane-spanning segments follow: residues 4–24 (VVLF…TARI) and 38–58 (MGML…ISLL). Histidine 144 contacts Zn(2+). The active site involves glutamate 145. Histidine 148 contacts Zn(2+). Helical transmembrane passes span 152 to 172 (GDMV…IFLS) and 199 to 219 (ISSI…VMYF). Glutamate 224 is a binding site for Zn(2+).

It belongs to the peptidase M48B family. It depends on Zn(2+) as a cofactor.

The protein resides in the cell inner membrane. In Chlorobium phaeobacteroides (strain BS1), this protein is Protease HtpX homolog.